The following is a 224-amino-acid chain: UPF0758 protein PBPRA0202 (224 aa).

Residues 102–224 (VLTSPQHTRH…IVSFSEQGWL (123 aa)) form the MPN domain. Residues His173, His175, and Asp186 each coordinate Zn(2+). Residues 173–186 (HNHPSGVAEPSQSD) carry the JAMM motif motif.

The protein belongs to the UPF0758 family.

The sequence is that of UPF0758 protein PBPRA0202 from Photobacterium profundum (strain SS9).